Consider the following 1463-residue polypeptide: Kinesin-like protein KIF15 (1463 aa).

The Kinesin motor domain occupies 18 to 354 (AIKVFVRVRP…LKFARRAKMI (337 aa)). Residue 99 to 106 (GQTGSGKT) participates in ATP binding. The interval 387–424 (AEGSIPRGPSESGDSQMSNSSTESNGPVSGQQSGSSSS) is disordered. Polar residues predominate over residues 398–414 (SGDSQMSNSSTESNGPV). Residues 415 to 424 (SGQQSGSSSS) show a composition bias toward low complexity. 2 coiled-coil regions span residues 436–517 (SLRD…LEHN) and 586–646 (TSTL…QGMK). Disordered regions lie at residues 686–720 (AGEE…SGDI), 1335–1356 (FKEK…SKLT), and 1409–1444 (QLGK…EAGA). A compositionally biased stretch (polar residues) spans 701–715 (DNGSPLRSHSTNSLP). Over residues 1418-1428 (EQMKRDYEALQ) the composition is skewed to basic and acidic residues.

This sequence belongs to the TRAFAC class myosin-kinesin ATPase superfamily. Kinesin family. KLP2 subfamily. As to quaternary structure, homodimer.

The protein localises to the cytoplasm. The protein resides in the cytoskeleton. Its subcellular location is the spindle. In terms of biological role, plus-end directed kinesin-like motor enzyme involved in mitotic spindle assembly. Plays a role in positioning spindle poles during mitosis, specifically at prometaphase. This is Kinesin-like protein KIF15 (KIF15) from Strongylocentrotus purpuratus (Purple sea urchin).